The following is a 199-amino-acid chain: Cytochrome b (199 aa).

4 helical membrane passes run 1 to 8 (LTGLFLAM), 32 to 53 (WLIR…YFHI), 68 to 88 (WNIG…GYVL), and 133 to 153 (FFAF…LHLL). 2 residues coordinate heme b: H38 and H52. Positions 137 and 151 each coordinate heme b. Residue H156 participates in a ubiquinone binding. A helical transmembrane segment spans residues 181–199 (YKDLLGFAILLVALASLAH).

The protein belongs to the cytochrome b family. In terms of assembly, the cytochrome bc1 complex contains 3 respiratory subunits (MT-CYB, CYC1 and UQCRFS1), 2 core proteins (UQCRC1 and UQCRC2) and probably 6 low-molecular weight proteins. Heme b is required as a cofactor.

It localises to the mitochondrion inner membrane. Its function is as follows. Component of the ubiquinol-cytochrome c reductase complex (complex III or cytochrome b-c1 complex) that is part of the mitochondrial respiratory chain. The b-c1 complex mediates electron transfer from ubiquinol to cytochrome c. Contributes to the generation of a proton gradient across the mitochondrial membrane that is then used for ATP synthesis. The sequence is that of Cytochrome b (mt-cyb) from Sarda chiliensis (Pacific bonito).